We begin with the raw amino-acid sequence, 447 residues long: METAEPVSYEFPGHAVGAVAPRRMMGSNVGHNFPFYTNPTGGYTLPFHQSSSPAYSFGHTLNHHHHHHHHHPGYQHYFVAGQQPINPQPVRLSSEPPSIQQIPDIRPAKNAVNRVARDPLMKIEHNGASQQPPGAQSSSNEEGAQGKSSSSNEVEFSTEVDILMKAIQAKASAQSPGVQSLPPLQQLTHGGSNGYPQSYSMPVTTPRCTVMVEEAPSRSGKKRKYACTLPQCGKSFAQKTHLDIHMRAHTGDKPFVCKEPSCGQRFSQLGNLKTHQRRHTGEKPFSCDICQKRFAQRGNVRAHKITHQHAKPFTCLLDDCGKQFTQLGNLKSHQNKFHATTLRNLTMKFSQVTEGDHMSPQDRKLWEYFATLYKNSNKGIKGRGKDRRISPTSRSDPGSESRRRIEPLSSTDDKMRRASYGDTSMYNGGSSSDDDDAEPYFIERQAH.

2 disordered regions span residues 125–155 (HNGA…NEVE) and 174–199 (QSPG…PQSY). The segment covering 127 to 139 (GASQQPPGAQSSS) has biased composition (low complexity). Polar residues predominate over residues 140 to 155 (NEEGAQGKSSSSNEVE). C2H2-type zinc fingers lie at residues 225–249 (YACT…MRAH), 255–279 (FVCK…QRRH), 285–307 (FSCD…KITH), and 313–338 (FTCL…NKFH). The tract at residues 377–447 (NKGIKGRGKD…EPYFIERQAH (71 aa)) is disordered. Positions 397-416 (PGSESRRRIEPLSSTDDKMR) are enriched in basic and acidic residues. The span at 421 to 431 (GDTSMYNGGSS) shows a compositional bias: polar residues.

The protein resides in the nucleus. Its function is as follows. Transcription factor that acts as a positive regulator of ochratoxin A (OTA) biosynthesis via controlling the expression of antioxidant genes and oxidative phosphorylation genes. This Aspergillus niger (strain ATCC MYA-4892 / CBS 513.88 / FGSC A1513) protein is Transcription factor azf1.